We begin with the raw amino-acid sequence, 198 residues long: Photosystem I assembly protein Ycf4 (198 aa).

The segment at 1 to 20 is disordered; it reads MTASTTINKGDSPNGDSSAS. 2 helical membrane-spanning segments follow: residues 38-58 and 78-98; these read WASI…SSYL and LVMG…WLAI.

This sequence belongs to the Ycf4 family.

The protein localises to the cellular thylakoid membrane. In terms of biological role, seems to be required for the assembly of the photosystem I complex. The protein is Photosystem I assembly protein Ycf4 of Trichormus variabilis (strain ATCC 29413 / PCC 7937) (Anabaena variabilis).